A 262-amino-acid polypeptide reads, in one-letter code: Phosphatidylserine decarboxylase proenzyme (262 aa).

Active-site charge relay system; for autoendoproteolytic cleavage activity residues include aspartate 86, histidine 142, and serine 226. Serine 226 serves as the catalytic Schiff-base intermediate with substrate; via pyruvic acid; for decarboxylase activity. At serine 226 the chain carries Pyruvic acid (Ser); by autocatalysis.

This sequence belongs to the phosphatidylserine decarboxylase family. PSD-B subfamily. Prokaryotic type I sub-subfamily. As to quaternary structure, heterodimer of a large membrane-associated beta subunit and a small pyruvoyl-containing alpha subunit. Pyruvate serves as cofactor. In terms of processing, is synthesized initially as an inactive proenzyme. Formation of the active enzyme involves a self-maturation process in which the active site pyruvoyl group is generated from an internal serine residue via an autocatalytic post-translational modification. Two non-identical subunits are generated from the proenzyme in this reaction, and the pyruvate is formed at the N-terminus of the alpha chain, which is derived from the carboxyl end of the proenzyme. The autoendoproteolytic cleavage occurs by a canonical serine protease mechanism, in which the side chain hydroxyl group of the serine supplies its oxygen atom to form the C-terminus of the beta chain, while the remainder of the serine residue undergoes an oxidative deamination to produce ammonia and the pyruvoyl prosthetic group on the alpha chain. During this reaction, the Ser that is part of the protease active site of the proenzyme becomes the pyruvoyl prosthetic group, which constitutes an essential element of the active site of the mature decarboxylase.

The protein resides in the cell membrane. The catalysed reaction is a 1,2-diacyl-sn-glycero-3-phospho-L-serine + H(+) = a 1,2-diacyl-sn-glycero-3-phosphoethanolamine + CO2. It participates in phospholipid metabolism; phosphatidylethanolamine biosynthesis; phosphatidylethanolamine from CDP-diacylglycerol: step 2/2. Its function is as follows. Catalyzes the formation of phosphatidylethanolamine (PtdEtn) from phosphatidylserine (PtdSer). This Bacillus anthracis protein is Phosphatidylserine decarboxylase proenzyme.